Consider the following 295-residue polypeptide: Polyprenyl transferase dpmaC (295 aa).

Transmembrane regions (helical) follow at residues 39–59 (LFCV…NDWI), 84–104 (QAFV…HVML), 109–124 (VHVI…YPFL), 131–151 (KLHI…AIPG), 168–188 (YCLP…TAYS), 213–233 (LVLV…LTQF), 237–257 (WLWV…LALF), and 271–291 (SNFV…LLKA).

This sequence belongs to the UbiA prenyltransferase family. Mg(2+) is required as a cofactor.

It localises to the membrane. Its pathway is secondary metabolite biosynthesis; terpenoid biosynthesis. In terms of biological role, polyprenyl transferase; part of the gene cluster that mediates the biosynthesis of the diterpenoid pyrones subglutinols A and B. The first step of the pathway is the synthesis of the alpha-pyrone moiety by the polyketide synthase dpmaA via condensation of one acetyl-CoA starter unit with 3 malonyl-CoA units and 2 methylations. The alpha-pyrone is then combined with geranylgeranyl pyrophosphate (GGPP) formed by the GGPP synthase dpmaD through the action of the prenyltransferase dpmaC to yield a linear alpha-pyrone diterpenoid. Subsequent steps in the diterpenoid pyrone biosynthetic pathway involve the decalin core formation, which is initiated by the epoxidation of the C10-C11 olefin by the FAD-dependent oxidoreductase dpmaE, and is followed by a cyclization cascade catalyzed by the terpene cyclase dpmaB. The dehydrogenase dpmaF is then involved in tetrahydrofuran (THF) ring formation at the C5 unit to complete the formation of subglutinols A and B. The sequence is that of Polyprenyl transferase dpmaC from Metarhizium anisopliae (Entomophthora anisopliae).